A 481-amino-acid chain; its full sequence is Glycogen synthase (481 aa).

K15 contributes to the ADP-alpha-D-glucose binding site.

It belongs to the glycosyltransferase 1 family. Bacterial/plant glycogen synthase subfamily.

It carries out the reaction [(1-&gt;4)-alpha-D-glucosyl](n) + ADP-alpha-D-glucose = [(1-&gt;4)-alpha-D-glucosyl](n+1) + ADP + H(+). It functions in the pathway glycan biosynthesis; glycogen biosynthesis. Functionally, synthesizes alpha-1,4-glucan chains using ADP-glucose. In Mesorhizobium japonicum (strain LMG 29417 / CECT 9101 / MAFF 303099) (Mesorhizobium loti (strain MAFF 303099)), this protein is Glycogen synthase.